Here is a 236-residue protein sequence, read N- to C-terminus: Eukaryotic translation initiation factor 3 subunit J (236 aa).

The tract at residues 20-88 is disordered; the sequence is ANNINKWEGE…AEEEKRLANL (69 aa). The span at 28-46 shows a compositional bias: acidic residues; sequence GEDDDEDVKESWEDEEEKK. Basic and acidic residues-rich tracts occupy residues 47 to 58 and 68 to 88; these read DEEKPTKTEVPV and AKLEEEERLREAEEEKRLANL.

The protein belongs to the eIF-3 subunit J family. Component of the eukaryotic translation initiation factor 3 (eIF-3) complex. The eIF-3 complex interacts with pix.

The protein resides in the cytoplasm. Functionally, component of the eukaryotic translation initiation factor 3 (eIF-3) complex, which is involved in protein synthesis of a specialized repertoire of mRNAs and, together with other initiation factors, stimulates binding of mRNA and methionyl-tRNAi to the 40S ribosome. The eIF-3 complex specifically targets and initiates translation of a subset of mRNAs involved in cell proliferation. This Drosophila willistoni (Fruit fly) protein is Eukaryotic translation initiation factor 3 subunit J.